Consider the following 535-residue polypeptide: Glutamyl-tRNA reductase 3, chloroplastic (535 aa).

The active-site Nucleophile is Cys131. Residues 131–133 (CNR), Ser190, 195–197 (EGQ), and Gln201 each bind substrate. 272–277 (GAGKMG) serves as a coordination point for NADP(+).

It belongs to the glutamyl-tRNA reductase family. As to expression, primarily expressed in roots.

The protein resides in the plastid. It is found in the chloroplast. It catalyses the reaction (S)-4-amino-5-oxopentanoate + tRNA(Glu) + NADP(+) = L-glutamyl-tRNA(Glu) + NADPH + H(+). The protein operates within porphyrin-containing compound metabolism; protoporphyrin-IX biosynthesis; 5-aminolevulinate from L-glutamyl-tRNA(Glu): step 1/2. Catalyzes the NADPH-dependent reduction of glutamyl-tRNA(Glu) to glutamate 1-semialdehyde (GSA). The chain is Glutamyl-tRNA reductase 3, chloroplastic (HEMA3) from Hordeum vulgare (Barley).